Consider the following 432-residue polypeptide: Adenylosuccinate synthetase (432 aa).

GTP contacts are provided by residues 13–19 and 41–43; these read GDEGKGK and GHT. The active-site Proton acceptor is the Asp14. Positions 14 and 41 each coordinate Mg(2+). Residues 14–17, 39–42, Thr130, Arg144, Gln225, Thr240, and Arg304 each bind IMP; these read DEGK and NAGH. His42 functions as the Proton donor in the catalytic mechanism. 300-306 contacts substrate; it reads ATTGRRR. GTP-binding positions include Arg306, 332–334, and 415–417; these read KLD and STG.

Belongs to the adenylosuccinate synthetase family. In terms of assembly, homodimer. It depends on Mg(2+) as a cofactor.

Its subcellular location is the cytoplasm. It catalyses the reaction IMP + L-aspartate + GTP = N(6)-(1,2-dicarboxyethyl)-AMP + GDP + phosphate + 2 H(+). The protein operates within purine metabolism; AMP biosynthesis via de novo pathway; AMP from IMP: step 1/2. In terms of biological role, plays an important role in the de novo pathway of purine nucleotide biosynthesis. Catalyzes the first committed step in the biosynthesis of AMP from IMP. This is Adenylosuccinate synthetase from Klebsiella pneumoniae subsp. pneumoniae (strain ATCC 700721 / MGH 78578).